A 1439-amino-acid polypeptide reads, in one-letter code: Histone-lysine N-methyltransferase NSD3 (1439 aa).

A disordered region spans residues 121–151; that stretch reads PHEILEKPSPPQPPPPPSVPQTVIPKKTGSP. Pro residues predominate over residues 128 to 139; sequence PSPPQPPPPPSV. At Ser-150 the chain carries Phosphoserine. Residues 154 to 157 carry the KIKL motif; it reads KLKI. Residues 181 to 247 are disordered; it reads QASEHTKSKH…PREEPVLKEA (67 aa). Residues 187 to 201 are compositionally biased toward basic residues; sequence KSKHESRKEKRKKSN. Residues 202-244 are compositionally biased toward basic and acidic residues; that stretch reads RHESSRSEERRSHKIPKLEPEGQNRPNERVDTAPEKPREEPVL. Glycyl lysine isopeptide (Lys-Gly) (interchain with G-Cter in SUMO2) cross-links involve residues Lys-218 and Lys-245. In terms of domain architecture, PWWP 1 spans 270-333; the sequence is VGDLVWSKVG…EKRVREYKGH (64 aa). Disordered stretches follow at residues 344-367 and 401-466; these read AKQA…ERAQ and EASS…PPPV. Composition is skewed to polar residues over residues 401-413 and 425-445; these read EASS…VTSK and VLNS…QSST. Residue Lys-413 forms a Glycyl lysine isopeptide (Lys-Gly) (interchain with G-Cter in SUMO2) linkage. The residue at position 457 (Ser-457) is a Phosphoserine. Glycyl lysine isopeptide (Lys-Gly) (interchain with G-Cter in SUMO2) cross-links involve residues Lys-502 and Lys-532. The disordered stretch occupies residues 540–695; sequence QDRLIISSPS…VDSSLSRRGV (156 aa). Over residues 546-568 the composition is skewed to polar residues; sequence SSPSQRSEKPAQSASSPEATSGS. Basic and acidic residues predominate over residues 583–595; that stretch reads TRSESEKSAEVVP. 3 positions are modified to phosphoserine: Ser-585, Ser-587, and Ser-590. Residue Lys-628 forms a Glycyl lysine isopeptide (Lys-Gly) (interchain with G-Cter in SUMO2) linkage. The segment covering 637 to 648 has biased composition (polar residues); sequence STDVETASCTYR. A Phosphoserine modification is found at Ser-655. Low complexity predominate over residues 670 to 691; sequence DSPSATADADASDAQSVDSSLS. 3 PHD-type zinc fingers span residues 701–748, 749–805, and 862–955; these read DTVC…CETG, QHPC…CSME, and VGFC…CKAG. Lys-790 carries the N6-acetyllysine modification. The region spanning 960 to 1025 is the PWWP 2 domain; it reads YKQIVWVKLG…QGRVFPYVEG (66 aa). Positions 1036-1065 form a coiled coil; sequence INKTFKKALEEAAKRFQELKAQRESKEALE. An AWS domain is found at 1096-1146; it reads SEIPRCNCKPGDENPCGLESQCLNRMSQYECHPQVCPAGDRCQNQCFTKRL. The SET domain maps to 1148–1265; that stretch reads PDAEVIKTER…AGMELTFNYN (118 aa). Residue Lys-1154 forms a Glycyl lysine isopeptide (Lys-Gly) (interchain with G-Cter in SUMO2) linkage. In terms of domain architecture, Post-SET spans 1272–1288; that stretch reads GRTVCHCGADNCSGFLG. The PHD-type 4; atypical zinc finger occupies 1323–1370; the sequence is EDYCFQCGDGGELVMCDKKDCPKAYHLLCLNLTQPPHGKWECPWHRCD.

This sequence belongs to the class V-like SAM-binding methyltransferase superfamily. Histone-lysine methyltransferase family. SET2 subfamily. Interacts with BRD4. Interacts (via KIKL motif) with BRD3 (via NET domain).

The protein localises to the nucleus. It is found in the chromosome. The enzyme catalyses L-lysyl(4)-[histone H3] + 2 S-adenosyl-L-methionine = N(6),N(6)-dimethyl-L-lysyl(4)-[histone H3] + 2 S-adenosyl-L-homocysteine + 2 H(+). The catalysed reaction is L-lysyl(27)-[histone H3] + 2 S-adenosyl-L-methionine = N(6),N(6)-dimethyl-L-lysyl(27)-[histone H3] + 2 S-adenosyl-L-homocysteine + 2 H(+). Its function is as follows. Histone methyltransferase. Preferentially dimethylates 'Lys-4' and 'Lys-27' of histone H3 forming H3K4me2 and H3K27me2. H3 'Lys-4' methylation represents a specific tag for epigenetic transcriptional activation, while 'Lys-27' is a mark for transcriptional repression. This chain is Histone-lysine N-methyltransferase NSD3 (Nsd3), found in Mus musculus (Mouse).